The following is a 346-amino-acid chain: Cytochrome c551 peroxidase (346 aa).

An N-terminal signal peptide occupies residues 1-23; it reads MQSSQLLPLGSLLLSFATPLAQA. Heme c is bound by residues C74, C77, H78, C220, C223, H224, H284, and M298.

It depends on heme c as a cofactor. Post-translationally, binds 2 heme groups per subunit. Sequencing of the whole protein indicates about 20% starts on Val-247.

It localises to the periplasm. The enzyme catalyses 2 Fe(II)-[cytochrome c] + H2O2 + 2 H(+) = 2 Fe(III)-[cytochrome c] + 2 H2O. Catalyzes the peroxidative oxidation of azurin and cytochrome c551. Likely to provide protection against toxic peroxides. The sequence is that of Cytochrome c551 peroxidase (ccpA) from Pseudomonas aeruginosa (strain ATCC 15692 / DSM 22644 / CIP 104116 / JCM 14847 / LMG 12228 / 1C / PRS 101 / PAO1).